A 307-amino-acid polypeptide reads, in one-letter code: Porphobilinogen deaminase (307 aa).

An S-(dipyrrolylmethanemethyl)cysteine modification is found at C241.

Belongs to the HMBS family. In terms of assembly, monomer. Dipyrromethane serves as cofactor.

The catalysed reaction is 4 porphobilinogen + H2O = hydroxymethylbilane + 4 NH4(+). The protein operates within porphyrin-containing compound metabolism; protoporphyrin-IX biosynthesis; coproporphyrinogen-III from 5-aminolevulinate: step 2/4. Tetrapolymerization of the monopyrrole PBG into the hydroxymethylbilane pre-uroporphyrinogen in several discrete steps. The polypeptide is Porphobilinogen deaminase (Coxiella burnetii (strain CbuG_Q212) (Coxiella burnetii (strain Q212))).